A 1373-amino-acid polypeptide reads, in one-letter code: DNA-directed RNA polymerase subunit beta (1373 aa).

The protein belongs to the RNA polymerase beta chain family. As to quaternary structure, the RNAP catalytic core consists of 2 alpha, 1 beta, 1 beta' and 1 omega subunit. When a sigma factor is associated with the core the holoenzyme is formed, which can initiate transcription.

The enzyme catalyses RNA(n) + a ribonucleoside 5'-triphosphate = RNA(n+1) + diphosphate. Functionally, DNA-dependent RNA polymerase catalyzes the transcription of DNA into RNA using the four ribonucleoside triphosphates as substrates. The sequence is that of DNA-directed RNA polymerase subunit beta from Rickettsia canadensis (strain McKiel).